The following is a 450-amino-acid chain: Interferon-induced protein 75 (450 aa).

The HSR domain maps to 1 to 108 (MFTLTKALEK…IFRSFRNVGY (108 aa)). Disordered stretches follow at residues 131-156 (CSLQ…APRV) and 170-225 (LDEQ…VKDD). The segment covering 143 to 154 (QLSLPSHLSSAP) has biased composition (low complexity). Residues Ser175 and Ser177 each carry the phosphoserine modification. Residues 197-212 (SRDHQRKDKEDSREMP) are compositionally biased toward basic and acidic residues. The residue at position 226 (Ser226) is a Phosphoserine. Disordered stretches follow at residues 238-283 (VLCT…HGVQ) and 318-360 (AQTS…KNDA). The span at 245–267 (KKARRKKRLNWSNSKRGRQKKKP) shows a compositional bias: basic residues. The Nuclear localization signal signature appears at 251-266 (KRLNWSNSKRGRQKKK). Over residues 343–353 (TSTAGKTTQVP) the composition is skewed to polar residues. Residues 358 to 439 (NDAVDFLSPT…RQLEQKGLLF (82 aa)) form the SAND domain.

It localises to the nucleus. The protein is Interferon-induced protein 75 (Ifi75) of Mus caroli (Ryukyu mouse).